The sequence spans 118 residues: Probable non-functional immunoglobulin lambda variable 1-50 (118 aa).

The N-terminal stretch at 1 to 19 (MAWSSLLLTLLAHCTGSWA) is a signal peptide. The segment at 20 to 44 (QSVLTQPPSVSGAPGQRVTISCTGS) is framework-1. The Ig-like domain maps to 20-118 (QSVLTQPPSV…CKAWDNSLNA (99 aa)). Cys41 and Cys109 form a disulfide bridge. Residues 45–53 (SSNIGAGYV) are complementarity-determining-1. Positions 54 to 70 (VHWYQQLPGTAPKLLIY) are framework-2. The interval 71–73 (GNS) is complementarity-determining-2. The framework-3 stretch occupies residues 74–109 (NRPSGVPDQFSGSKSGTSASLAITGLQSEDEADYYC). The interval 110–118 (KAWDNSLNA) is complementarity-determining-3.

As to quaternary structure, immunoglobulins are composed of two identical heavy chains and two identical light chains; disulfide-linked.

The protein resides in the secreted. The protein localises to the cell membrane. In terms of biological role, probable non-functional open reading frame (ORF) of V region of the variable domain of immunoglobulin light chains. Non-functional ORF generally cannot participate in the synthesis of a productive immunoglobulin chain due to altered V-(D)-J or switch recombination and/or splicing site (at mRNA level) and/or conserved amino acid change (protein level). Immunoglobulins, also known as antibodies, are membrane-bound or secreted glycoproteins produced by B lymphocytes. In the recognition phase of humoral immunity, the membrane-bound immunoglobulins serve as receptors which, upon binding of a specific antigen, trigger the clonal expansion and differentiation of B lymphocytes into immunoglobulins-secreting plasma cells. Secreted immunoglobulins mediate the effector phase of humoral immunity, which results in the elimination of bound antigens. The antigen binding site is formed by the variable domain of one heavy chain, together with that of its associated light chain. Thus, each immunoglobulin has two antigen binding sites with remarkable affinity for a particular antigen. The variable domains are assembled by a process called V-(D)-J rearrangement and can then be subjected to somatic hypermutations which, after exposure to antigen and selection, allow affinity maturation for a particular antigen. The sequence is that of Probable non-functional immunoglobulin lambda variable 1-50 from Homo sapiens (Human).